Reading from the N-terminus, the 467-residue chain is Fumarate hydratase class II (467 aa).

Substrate is bound by residues serine 98 to threonine 100, arginine 126, histidine 129 to aspartate 132, serine 139 to asparagine 141, and threonine 187. Histidine 188 serves as the catalytic Proton donor/acceptor. Serine 318 is an active-site residue. Substrate is bound by residues serine 319 and lysine 324–asparagine 326.

The protein belongs to the class-II fumarase/aspartase family. Fumarase subfamily. As to quaternary structure, homotetramer.

The protein resides in the cytoplasm. The catalysed reaction is (S)-malate = fumarate + H2O. The protein operates within carbohydrate metabolism; tricarboxylic acid cycle; (S)-malate from fumarate: step 1/1. Involved in the TCA cycle. Catalyzes the stereospecific interconversion of fumarate to L-malate. This is Fumarate hydratase class II from Escherichia coli O157:H7.